A 372-amino-acid chain; its full sequence is Phospho-N-acetylmuramoyl-pentapeptide-transferase (372 aa).

Helical transmembrane passes span 25-45 (RSLL…PVMI), 73-93 (TMGG…WADL), 98-118 (VWIV…DDWI), 134-154 (FFWT…IAQN), 176-196 (SIPL…YLVI), 211-231 (GLAI…AYLA), 251-271 (LVVI…YNAH), 275-295 (IFMG…IAVM), 300-320 (IVFA…FLQI), and 349-369 (QVVT…LMTL).

The protein belongs to the glycosyltransferase 4 family. MraY subfamily. Mg(2+) is required as a cofactor.

The protein localises to the cell inner membrane. The enzyme catalyses UDP-N-acetyl-alpha-D-muramoyl-L-alanyl-gamma-D-glutamyl-meso-2,6-diaminopimeloyl-D-alanyl-D-alanine + di-trans,octa-cis-undecaprenyl phosphate = di-trans,octa-cis-undecaprenyl diphospho-N-acetyl-alpha-D-muramoyl-L-alanyl-D-glutamyl-meso-2,6-diaminopimeloyl-D-alanyl-D-alanine + UMP. It participates in cell wall biogenesis; peptidoglycan biosynthesis. Its function is as follows. Catalyzes the initial step of the lipid cycle reactions in the biosynthesis of the cell wall peptidoglycan: transfers peptidoglycan precursor phospho-MurNAc-pentapeptide from UDP-MurNAc-pentapeptide onto the lipid carrier undecaprenyl phosphate, yielding undecaprenyl-pyrophosphoryl-MurNAc-pentapeptide, known as lipid I. This chain is Phospho-N-acetylmuramoyl-pentapeptide-transferase, found in Acinetobacter baylyi (strain ATCC 33305 / BD413 / ADP1).